Here is a 426-residue protein sequence, read N- to C-terminus: MMEMRNVKGTKDYLPEEQVLRNKIKRACEDTFERYGCKPLETPTLNMYELMSYKYGGGDEILKEIYTLQDQGKRELALRYDLTIPFAKVVAMNPNLRLPFKRYEIGKVFRDGPIKQGRFREFIQCDVDIVGVESVMAEAELMAMAFELFRTLNLEITIQYNNRKLLNGILESINIPTELTSDVILSLDKIEKIGIDGVRKDVLERGISEEMADTICNTVLSCLKLTIADFKEAFNNPLVADGVNELQQLQQYLIALGINENTIFNPFLARGLTMYTGTVYEIFLKDRSITSSIGSGGRYDNIIGAFRGDNMNYPTVGISFGLDVIYTALSQKETISSTADVFIIPLGTELQCLQIAQQLRSTTSLKVELELAGRKLKRALNYANKENIPYVLIIGEDELSTNTVVLRNMKEGSEVKVPISSLSRYL.

It belongs to the class-II aminoacyl-tRNA synthetase family. As to quaternary structure, homodimer.

It localises to the cytoplasm. The enzyme catalyses tRNA(His) + L-histidine + ATP = L-histidyl-tRNA(His) + AMP + diphosphate + H(+). This is Histidine--tRNA ligase 1 from Bacillus cereus (strain ATCC 14579 / DSM 31 / CCUG 7414 / JCM 2152 / NBRC 15305 / NCIMB 9373 / NCTC 2599 / NRRL B-3711).